A 254-amino-acid polypeptide reads, in one-letter code: Putative biopolymer transport protein ExbB-like 1 (254 aa).

Transmembrane regions (helical) follow at residues 39 to 59, 141 to 161, and 185 to 205; these read GGVV…TAFE, LETI…TGLI, and IGEA…ALLV.

This sequence belongs to the ExbB/TolQ family.

Its subcellular location is the cell inner membrane. In terms of biological role, involved in the TonB-dependent energy-dependent transport of various receptor-bound substrates. Protects ExbD from proteolytic degradation and functionally stabilizes TonB. The polypeptide is Putative biopolymer transport protein ExbB-like 1 (Synechocystis sp. (strain ATCC 27184 / PCC 6803 / Kazusa)).